Consider the following 78-residue polypeptide: Large ribosomal subunit protein bL28 (78 aa).

The segment at M1 to P31 is disordered.

It belongs to the bacterial ribosomal protein bL28 family.

The polypeptide is Large ribosomal subunit protein bL28 (Paenarthrobacter aurescens (strain TC1)).